A 159-amino-acid polypeptide reads, in one-letter code: Growth arrest and DNA damage-inducible protein GADD45 gamma (159 aa).

The tract at residues Val43 to Cys86 is homodimerization.

Belongs to the GADD45 family. As to quaternary structure, undergoes concentration-dependent homodimerization, which is required for growth inhibititory activity and enhances interaction with PCNA. Interacts with GADD45GIP1. Interacts with PCNA.

Functionally, involved in the regulation of growth and apoptosis. Mediates activation of stress-responsive MTK1/MEKK4 MAPKKK. The polypeptide is Growth arrest and DNA damage-inducible protein GADD45 gamma (Gadd45g) (Rattus norvegicus (Rat)).